Here is a 139-residue protein sequence, read N- to C-terminus: Crossover junction endodeoxyribonuclease Hje (139 aa).

Positions 10, 39, and 52 each coordinate Mg(2+).

It belongs to the Holliday junction resolvase Hjc family. Hje subfamily. In terms of assembly, homodimer. The cofactor is Mg(2+).

It carries out the reaction Endonucleolytic cleavage at a junction such as a reciprocal single-stranded crossover between two homologous DNA duplexes (Holliday junction).. In terms of biological role, a structure-specific endonuclease that resolves Holliday junction (HJ) intermediates during genetic recombination. Acts only on 4-way DNA junctions in a sequence non-specific manner; introduces paired nicks in opposing strands 2 bases 3' of the point of strand exchange only on continuous strands of 4-way junction DNA. Cleaves both mobile and immobile junctions. Functionally, redundant function with Holliday junction resolvase Hjc. The chain is Crossover junction endodeoxyribonuclease Hje from Sulfolobus acidocaldarius (strain ATCC 33909 / DSM 639 / JCM 8929 / NBRC 15157 / NCIMB 11770).